The primary structure comprises 103 residues: MTSKLAVAFLAVFLLSAALCEAAVLARVSAELRCQCINTHSTPFHPKFIKELRVIESGPHCENSEIIVKLVNGKEVCLDPKEKWVQKVVQIFLKRTEKQQQQQ.

Residues Met1–Leu25 form the signal peptide. A Citrulline modification is found at Arg27. Cystine bridges form between Cys34–Cys61 and Cys36–Cys77.

The protein belongs to the intercrine alpha (chemokine CxC) family. In terms of assembly, homodimer. Interacts with TNFAIP6 (via Link domain); this interaction interferes with chemokine binding to glycosaminoglycans. In terms of processing, citrullination at Arg-27 prevents proteolysis, and dampens tissue inflammation, it also enhances leukocytosis, possibly through impaired chemokine clearance from the blood circulation. Alveolar macrophages.

It is found in the secreted. Chemotactic factor that mediates inflammatory response by attracting neutrophils, basophils, and T-cells to clear pathogens and protect the host from infection. Also plays an important role in neutrophil activation. Released in response to an inflammatory stimulus, exerts its effect by binding to the G-protein-coupled receptors CXCR1 and CXCR2, primarily found in neutrophils, monocytes and endothelial cells. G-protein heterotrimer (alpha, beta, gamma subunits) constitutively binds to CXCR1/CXCR2 receptor and activation by IL8 leads to beta and gamma subunits release from Galpha (GNAI2 in neutrophils) and activation of several downstream signaling pathways including PI3K and MAPK pathways. The protein is Interleukin-8 (CXCL8) of Sus scrofa (Pig).